The sequence spans 222 residues: GTP cyclohydrolase 1 (222 aa).

Zn(2+) is bound by residues cysteine 111, histidine 114, and cysteine 182.

Belongs to the GTP cyclohydrolase I family. Toroid-shaped homodecamer, composed of two pentamers of five dimers.

The enzyme catalyses GTP + H2O = 7,8-dihydroneopterin 3'-triphosphate + formate + H(+). The protein operates within cofactor biosynthesis; 7,8-dihydroneopterin triphosphate biosynthesis; 7,8-dihydroneopterin triphosphate from GTP: step 1/1. The polypeptide is GTP cyclohydrolase 1 (Enterobacter sp. (strain 638)).